A 163-amino-acid chain; its full sequence is MHSLPRSGSIRRTHSDTQATGWPPPQRIGDSPGPSPAFLSCPPSLCGGAAQTGDPVALPHGPEKWVWGGGLSPRNPHSWGIKAHGLRPPWAPRLERCMVPESEWAPWQPQLPCEPKWLGSRKSKPHRESGLRGGGPSRCAKRGTHSCGPRESGGPDTCHLPCH.

Disordered stretches follow at residues 1 to 78 (MHSL…NPHS) and 115 to 163 (PKWL…LPCH).

This is an uncharacterized protein from Homo sapiens (Human).